The primary structure comprises 169 residues: Peptide deformylase (169 aa).

Fe cation-binding residues include C91 and H133. E134 is an active-site residue. Residue H137 participates in Fe cation binding.

This sequence belongs to the polypeptide deformylase family. It depends on Fe(2+) as a cofactor.

The enzyme catalyses N-terminal N-formyl-L-methionyl-[peptide] + H2O = N-terminal L-methionyl-[peptide] + formate. Functionally, removes the formyl group from the N-terminal Met of newly synthesized proteins. Requires at least a dipeptide for an efficient rate of reaction. N-terminal L-methionine is a prerequisite for activity but the enzyme has broad specificity at other positions. The protein is Peptide deformylase of Pectobacterium atrosepticum (strain SCRI 1043 / ATCC BAA-672) (Erwinia carotovora subsp. atroseptica).